The following is a 231-amino-acid chain: 5'-methylthioadenosine/S-adenosylhomocysteine nucleosidase (231 aa).

Glutamate 12 serves as the catalytic Proton acceptor. Substrate-binding positions include glycine 78, methionine 153, and 174 to 175 (ME). Aspartate 198 functions as the Proton donor in the catalytic mechanism.

This sequence belongs to the PNP/UDP phosphorylase family. MtnN subfamily.

The enzyme catalyses S-adenosyl-L-homocysteine + H2O = S-(5-deoxy-D-ribos-5-yl)-L-homocysteine + adenine. The catalysed reaction is S-methyl-5'-thioadenosine + H2O = 5-(methylsulfanyl)-D-ribose + adenine. It catalyses the reaction 5'-deoxyadenosine + H2O = 5-deoxy-D-ribose + adenine. It functions in the pathway amino-acid biosynthesis; L-methionine biosynthesis via salvage pathway; S-methyl-5-thio-alpha-D-ribose 1-phosphate from S-methyl-5'-thioadenosine (hydrolase route): step 1/2. In terms of biological role, catalyzes the irreversible cleavage of the glycosidic bond in both 5'-methylthioadenosine (MTA) and S-adenosylhomocysteine (SAH/AdoHcy) to adenine and the corresponding thioribose, 5'-methylthioribose and S-ribosylhomocysteine, respectively. Also cleaves 5'-deoxyadenosine, a toxic by-product of radical S-adenosylmethionine (SAM) enzymes, into 5-deoxyribose and adenine. The chain is 5'-methylthioadenosine/S-adenosylhomocysteine nucleosidase from Bacillus subtilis (strain 168).